Here is a 108-residue protein sequence, read N- to C-terminus: MIKTTLLFFATALCEIIGCFLPWLWLKRNASIWLLLPAGISLALFVWLLTLHPAASGRIYAAYGGVYVCTALMWLRVVDGVKLTLYDWTGALIALCGMLIIVAGWGRT.

The Periplasmic segment spans residues 1–5; it reads MIKTT. A helical transmembrane segment spans residues 6 to 26; sequence LLFFATALCEIIGCFLPWLWL. The Cytoplasmic portion of the chain corresponds to 27-30; sequence KRNA. The helical transmembrane segment at 31 to 51 threads the bilayer; sequence SIWLLLPAGISLALFVWLLTL. Topologically, residues 52-60 are periplasmic; the sequence is HPAASGRIY. The chain crosses the membrane as a helical span at residues 61-81; that stretch reads AAYGGVYVCTALMWLRVVDGV. The Cytoplasmic segment spans residues 82-84; sequence KLT. Residues 85–105 traverse the membrane as a helical segment; the sequence is LYDWTGALIALCGMLIIVAGW. Residues 106–108 lie on the Periplasmic side of the membrane; sequence GRT.

This sequence belongs to the UPF0060 family.

The protein localises to the cell inner membrane. The polypeptide is UPF0060 membrane protein YnfA (Shigella dysenteriae serotype 1 (strain Sd197)).